The following is a 392-amino-acid chain: L-lactate dehydrogenase (392 aa).

An FMN hydroxy acid dehydrogenase domain is found at 1–380; sequence MIISASTDYR…GSDSLVTGSA (380 aa). Y24 is a substrate binding site. S106 and Q127 together coordinate FMN. Residue Y129 coordinates substrate. Residue T155 coordinates FMN. Position 164 (R164) interacts with substrate. An FMN-binding site is contributed by K251. H275 (proton acceptor) is an active-site residue. Position 278 (R278) interacts with substrate. 306 to 330 is an FMN binding site; that stretch reads DSGVRNGLDVVRMIAMGADTILLGR.

The protein belongs to the FMN-dependent alpha-hydroxy acid dehydrogenase family. FMN serves as cofactor.

The protein resides in the cell inner membrane. It catalyses the reaction (S)-lactate + A = pyruvate + AH2. Catalyzes the conversion of L-lactate to pyruvate. Is coupled to the respiratory chain. The sequence is that of L-lactate dehydrogenase from Chromohalobacter salexigens (strain ATCC BAA-138 / DSM 3043 / CIP 106854 / NCIMB 13768 / 1H11).